The following is a 452-amino-acid chain: Pup--protein ligase (452 aa).

Glu9 contacts Mg(2+). Arg53 contributes to the ATP binding site. Tyr55 is a binding site for Mg(2+). Asp57 serves as the catalytic Proton acceptor. Glu63 provides a ligand contact to Mg(2+). ATP-binding residues include Thr66 and Trp419.

The protein belongs to the Pup ligase/Pup deamidase family. Pup-conjugating enzyme subfamily.

It catalyses the reaction ATP + [prokaryotic ubiquitin-like protein]-L-glutamate + [protein]-L-lysine = ADP + phosphate + N(6)-([prokaryotic ubiquitin-like protein]-gamma-L-glutamyl)-[protein]-L-lysine.. It participates in protein degradation; proteasomal Pup-dependent pathway. Its pathway is protein modification; protein pupylation. Functionally, catalyzes the covalent attachment of the prokaryotic ubiquitin-like protein modifier Pup to the proteasomal substrate proteins, thereby targeting them for proteasomal degradation. This tagging system is termed pupylation. The ligation reaction involves the side-chain carboxylate of the C-terminal glutamate of Pup and the side-chain amino group of a substrate lysine. The sequence is that of Pup--protein ligase from Mycobacterium sp. (strain JLS).